A 490-amino-acid chain; its full sequence is MKPCQLKQKQKTLAIAKVNNKGKVIQIIGPVLDIVFPDGQLPKVFNAIKINNSNNNWITCEVQQLLGDNKVRAVAMSTTEGLKRGASAIDTGEPISIPVGKETLGRIFNVLGEPIDEKGPVISNDKLPIHRPAPKFTQLETKPSIFETGIKVVDLLAPYRRGGKIGLFGGAGVGKTVLIMELINNVAKAHGGVSVFGGVGERTREGNDLYQEMKESGVINEKDLNLSKVALCYGQMNEPPGARMRVGLTALTMAEYFRDVNKQNVLLFIDNIFRFVQAGSEVSALLGRMPSAVGYQPTLGTEMGALQERITSTLDGSITSIQAVYVPADDLTDPAPATTFAHLDATTVLSRALAAKGIYPAVDPLDSTSTMLQPGIVSDEHYTTARKVKETLQRYKELQDIIAILGLDELSEEDRLIVSRARKIEKFLSQPFFVAEVFTGISGKYVSLSDSIKGFNMILSGEVDNIPEQAFYLVGRIEEAIDKAKQVEKS.

ATP is bound at residue 169-176; sequence GGAGVGKT.

Belongs to the ATPase alpha/beta chains family. In terms of assembly, F-type ATPases have 2 components, CF(1) - the catalytic core - and CF(0) - the membrane proton channel. CF(1) has five subunits: alpha(3), beta(3), gamma(1), delta(1), epsilon(1). CF(0) has four main subunits: a(1), b(1), b'(1) and c(9-12).

Its subcellular location is the plastid. It is found in the chloroplast thylakoid membrane. The catalysed reaction is ATP + H2O + 4 H(+)(in) = ADP + phosphate + 5 H(+)(out). Produces ATP from ADP in the presence of a proton gradient across the membrane. The catalytic sites are hosted primarily by the beta subunits. This is ATP synthase subunit beta, chloroplastic from Cyanidium caldarium (Red alga).